Consider the following 100-residue polypeptide: MIKSELVQIVAARNPHLYHRDVENIVNAVLDEITDALAAGNRVELRGFGAFSVKNRPSRSGRNPRTGESVFVEEKWVPFFKTGKELRERLNPGMGDEEDD.

Belongs to the bacterial histone-like protein family. In terms of assembly, heterodimer of an alpha and a beta chain.

Its function is as follows. This protein is one of the two subunits of integration host factor, a specific DNA-binding protein that functions in genetic recombination as well as in transcriptional and translational control. The sequence is that of Integration host factor subunit beta from Agrobacterium fabrum (strain C58 / ATCC 33970) (Agrobacterium tumefaciens (strain C58)).